The primary structure comprises 78 residues: Small ribosomal subunit protein bS18 (78 aa).

It belongs to the bacterial ribosomal protein bS18 family. As to quaternary structure, part of the 30S ribosomal subunit. Forms a tight heterodimer with protein bS6.

In terms of biological role, binds as a heterodimer with protein bS6 to the central domain of the 16S rRNA, where it helps stabilize the platform of the 30S subunit. The polypeptide is Small ribosomal subunit protein bS18 (Pediococcus pentosaceus (strain ATCC 25745 / CCUG 21536 / LMG 10740 / 183-1w)).